The sequence spans 305 residues: Methionyl-tRNA formyltransferase (305 aa).

111–114 (SLLP) contacts (6S)-5,6,7,8-tetrahydrofolate.

It belongs to the Fmt family.

It catalyses the reaction L-methionyl-tRNA(fMet) + (6R)-10-formyltetrahydrofolate = N-formyl-L-methionyl-tRNA(fMet) + (6S)-5,6,7,8-tetrahydrofolate + H(+). Attaches a formyl group to the free amino group of methionyl-tRNA(fMet). The formyl group appears to play a dual role in the initiator identity of N-formylmethionyl-tRNA by promoting its recognition by IF2 and preventing the misappropriation of this tRNA by the elongation apparatus. This is Methionyl-tRNA formyltransferase from Helicobacter acinonychis (strain Sheeba).